A 139-amino-acid chain; its full sequence is MNRFIIFMFVVVTYFGLNVAFDMFPCPKNKVLIRNELGPGLVLQYHCHSRDHNLDVANLQFNEYKEIAFGDKLGKRTRWSCILKHGLYMRYYSEFIAYMMANVRRCGAIRNWIARKDRIYLIRNVNPPAVFRYTWNKTK.

The N-terminal stretch at 1 to 20 (MNRFIIFMFVVVTYFGLNVA) is a signal peptide. An N-linked (GlcNAc...) asparagine glycan is attached at Asn136.

This sequence belongs to the plant self-incompatibility (S1) protein family.

It is found in the secreted. This Arabidopsis thaliana (Mouse-ear cress) protein is S-protein homolog 14.